The following is a 93-amino-acid chain: uncharacterized protein (93 aa).

The disordered stretch occupies residues 26 to 73 (NRGTIFRPMTRNSGIVGRRGGPVAPAPFRNNVQKPGTRPPGFKPPSGV).

This is an uncharacterized protein from Caenorhabditis elegans.